Reading from the N-terminus, the 413-residue chain is Putative competence-damage inducible protein (413 aa).

It belongs to the CinA family.

The polypeptide is Putative competence-damage inducible protein (Thermoanaerobacter sp. (strain X514)).